The chain runs to 835 residues: MAAPILKDVVAYVEVWSSNGTENYSKTFTTQLVEMGAKVSKTFNKQVTHVIFKDGYQSTWDKAQKRGVKLVSVLWVEKCRTAGAHIDESLFPAANTNEHLPSLIKKKRKCMQPKDFNFKTPENDKRFQKKFEKMAKELQRQKTNLDDDVPILLFESNGSLIYTPTIEINSSHHSAMEKRLQEMKEKRENLSPTSSQMIQQSHDNPSNSLCEAPLNISRDTLCSDECFAGGLHSSFDDLCGNSGCGNQERKLEGSINDIKSDVCISSLVLKANNIHSSPSFTHLDKSSPQKFLSNLSKEEINLQRNIAGKIVTPDQKQAAGVSQETFEEKYRLSPTLSSTKGHLLIHSRPRSSSVKRKRVSHGSHSPPKEKCKRKRSIRRSIMPRLQLCRSEGRLQHVAGPALEALSCGESSYDDYFSPDNLKERNSENLPPESQLPSSPAQFSCRSLSKKERTSIFEMSDFSCVGKKTRTVDITNFTAKTISSPQKTGNGEGRATSSCVTSAPEEALRCCGQAGKEDACPEGNGFSYTIEDPALPKGHDDDLTPLEGSLEEMKEAVDLKSTQNKGTTSKISNSSEGEAQSEHEPCFIVDCNMETSTEEKENLPGGYSGSVKNRPTRHDVLDDSCDGFKDLIKPHEELKKSGRGKKPTRTLVMTSMPSEKQNVVIQVVDKLKGFSIAPDVCETTTHVLSGKPLRTLNVLLGIARGCWVLSYDWVLWSLELGHWISEEPFELSHHFPAAPLCRSECHLSAGPYRGTLFADQPVMFVSPASSPPVAKLCELVHLCGGRVSQVPRQASIVIGPYSGKKKATVKYLSEKWVLDSITQHKVCASENYLLSQ.

One can recognise a BRCT 1 domain in the interval 1–93 (MAAPILKDVV…AHIDESLFPA (93 aa)). Phosphoserine occurs at positions 279, 287, 296, and 333. 2 disordered regions span residues 332–376 (LSPT…RKRS) and 417–442 (SPDNLKERNSENLPPESQLPSSPAQF). Thr335 carries the post-translational modification Phosphothreonine. Residues 343 to 361 (LLIHSRPRSSSVKRKRVSH) show a composition bias toward basic residues. Phosphoserine is present on Ser548. Residues 555-583 (AVDLKSTQNKGTTSKISNSSEGEAQSEHE) form a disordered region. Positions 559–577 (KSTQNKGTTSKISNSSEGE) are enriched in polar residues. 2 BRCT domains span residues 640-730 (SGRG…PFEL) and 751-833 (YRGT…NYLL).

In terms of assembly, interacts with CDC27 and maybe other components of the APC/C complex. Interacts with histone variant H2AX under DNA damage conditions.

It is found in the cytoplasm. The protein localises to the cytoskeleton. Its subcellular location is the microtubule organizing center. The protein resides in the centrosome. Its function is as follows. Implicated in chromosome condensation and DNA damage induced cellular responses. May play a role in neurogenesis and regulation of the size of the cerebral cortex. The sequence is that of Microcephalin from Pan troglodytes (Chimpanzee).